A 194-amino-acid polypeptide reads, in one-letter code: Nucleoside triphosphate pyrophosphatase (194 aa).

D71 acts as the Proton acceptor in catalysis.

It belongs to the Maf family. A divalent metal cation serves as cofactor.

It is found in the cytoplasm. The catalysed reaction is a ribonucleoside 5'-triphosphate + H2O = a ribonucleoside 5'-phosphate + diphosphate + H(+). It carries out the reaction a 2'-deoxyribonucleoside 5'-triphosphate + H2O = a 2'-deoxyribonucleoside 5'-phosphate + diphosphate + H(+). Nucleoside triphosphate pyrophosphatase. May have a dual role in cell division arrest and in preventing the incorporation of modified nucleotides into cellular nucleic acids. This is Nucleoside triphosphate pyrophosphatase from Paramagnetospirillum magneticum (strain ATCC 700264 / AMB-1) (Magnetospirillum magneticum).